Consider the following 338-residue polypeptide: 1-aminocyclopropane-1-carboxylate deaminase (338 aa).

Lysine 51 is subject to N6-(pyridoxal phosphate)lysine. The active-site Nucleophile is the serine 78.

It belongs to the ACC deaminase/D-cysteine desulfhydrase family. In terms of assembly, homotrimer. Pyridoxal 5'-phosphate serves as cofactor.

It catalyses the reaction 1-aminocyclopropane-1-carboxylate + H2O = 2-oxobutanoate + NH4(+). In terms of biological role, catalyzes a cyclopropane ring-opening reaction, the irreversible conversion of 1-aminocyclopropane-1-carboxylate (ACC) to ammonia and alpha-ketobutyrate. Allows growth on ACC as a nitrogen source. The sequence is that of 1-aminocyclopropane-1-carboxylate deaminase from Pseudomonas putida (Arthrobacter siderocapsulatus).